Here is an 89-residue protein sequence, read N- to C-terminus: Small ribosomal subunit protein uS15 (89 aa).

It belongs to the universal ribosomal protein uS15 family. In terms of assembly, part of the 30S ribosomal subunit. Forms a bridge to the 50S subunit in the 70S ribosome, contacting the 23S rRNA.

Functionally, one of the primary rRNA binding proteins, it binds directly to 16S rRNA where it helps nucleate assembly of the platform of the 30S subunit by binding and bridging several RNA helices of the 16S rRNA. In terms of biological role, forms an intersubunit bridge (bridge B4) with the 23S rRNA of the 50S subunit in the ribosome. The sequence is that of Small ribosomal subunit protein uS15 from Renibacterium salmoninarum (strain ATCC 33209 / DSM 20767 / JCM 11484 / NBRC 15589 / NCIMB 2235).